Reading from the N-terminus, the 122-residue chain is Ribonuclease P protein component 1 (122 aa).

It belongs to the eukaryotic/archaeal RNase P protein component 1 family. In terms of assembly, consists of a catalytic RNA component and at least 4-5 protein subunits.

The protein localises to the cytoplasm. It catalyses the reaction Endonucleolytic cleavage of RNA, removing 5'-extranucleotides from tRNA precursor.. In terms of biological role, part of ribonuclease P, a protein complex that generates mature tRNA molecules by cleaving their 5'-ends. The sequence is that of Ribonuclease P protein component 1 from Thermococcus sibiricus (strain DSM 12597 / MM 739).